The primary structure comprises 60 residues: Large ribosomal subunit protein bL32 (60 aa).

It belongs to the bacterial ribosomal protein bL32 family.

In Clostridium acetobutylicum (strain ATCC 824 / DSM 792 / JCM 1419 / IAM 19013 / LMG 5710 / NBRC 13948 / NRRL B-527 / VKM B-1787 / 2291 / W), this protein is Large ribosomal subunit protein bL32.